Here is a 163-residue protein sequence, read N- to C-terminus: CASP-like protein 1C2 (163 aa).

The Cytoplasmic portion of the chain corresponds to 1–7 (MAKLHRL). A helical transmembrane segment spans residues 8–28 (ISAVLRLAAAGAAAAAAVIMV). Over 29–50 (TSHETTSLFGIEMEAKYSYTPS) the chain is Extracellular. The helical transmembrane segment at 51 to 71 (FVFFVVAFAVTFAYSLLAAVL) threads the bilayer. Topologically, residues 72 to 80 (VRPGTTASR) are cytoplasmic. Residues 81–101 (LVLLSDVTVGMLLTGAVAATG) traverse the membrane as a helical segment. Residues 102–129 (AISQVGKSGNEHAGWLPICAQVQAYCGH) lie on the Extracellular side of the membrane. A helical transmembrane segment spans residues 130-150 (VMGALIAGFVSLLLYFLIIMY). Residues 151 to 163 (SLHAVAEPLCSCH) lie on the Cytoplasmic side of the membrane.

It belongs to the Casparian strip membrane proteins (CASP) family. Homodimer and heterodimers.

It is found in the cell membrane. The sequence is that of CASP-like protein 1C2 from Zea mays (Maize).